A 303-amino-acid polypeptide reads, in one-letter code: N-acetyl-D-glucosamine kinase (303 aa).

Residues 4–11 and 133–140 each bind ATP; these read GFDIGGTK and GVGGGLIF. The Zn(2+) site is built by His-157, Cys-177, Cys-179, and Cys-184.

The protein belongs to the ROK (NagC/XylR) family. NagK subfamily.

It carries out the reaction N-acetyl-D-glucosamine + ATP = N-acetyl-D-glucosamine 6-phosphate + ADP + H(+). The protein operates within cell wall biogenesis; peptidoglycan recycling. Its function is as follows. Catalyzes the phosphorylation of N-acetyl-D-glucosamine (GlcNAc) derived from cell-wall degradation, yielding GlcNAc-6-P. This chain is N-acetyl-D-glucosamine kinase, found in Escherichia coli O127:H6 (strain E2348/69 / EPEC).